The primary structure comprises 549 residues: Probable glucuronosyltransferase Os01g0157700 (549 aa).

The Cytoplasmic segment spans residues 1–16; it reads MDSEERSKKRLRLWSR. A helical; Signal-anchor for type II membrane protein transmembrane segment spans residues 17–37; that stretch reads AVVHFSLCFAIGVFAALLPLA. Residues 38–549 lie on the Lumenal side of the membrane; it reads ATGATSIDSI…TPEEGKTKEG (512 aa). 9 N-linked (GlcNAc...) asparagine glycosylation sites follow: Asn112, Asn139, Asn214, Asn229, Asn240, Asn251, Asn264, Asn269, and Asn300. The interval 232 to 252 is disordered; the sequence is ETTWDSSSNTTQTTWDSSSNK. Over residues 350–363 the composition is skewed to basic and acidic residues; that stretch reads IEQATPEKESLTKG. 3 disordered regions span residues 350–371, 413–432, and 441–524; these read IEQA…SHDM, EQET…ESHD, and KIEE…KETH. N-linked (GlcNAc...) asparagine glycans are attached at residues Asn421 and Asn452. Basic and acidic residues-rich tracts occupy residues 441–465, 472–496, and 503–524; these read KIEE…HDMM, KIDE…HDMM, and KIEE…KETH.

It belongs to the glycosyltransferase 43 family.

It localises to the golgi apparatus membrane. Functionally, involved in the synthesis of glucuronoxylan hemicellulose in secondary cell walls. The polypeptide is Probable glucuronosyltransferase Os01g0157700 (Oryza sativa subsp. japonica (Rice)).